A 64-amino-acid polypeptide reads, in one-letter code: Small ribosomal subunit protein eS17 (64 aa).

The protein belongs to the eukaryotic ribosomal protein eS17 family.

This is Small ribosomal subunit protein eS17 from Methanosarcina acetivorans (strain ATCC 35395 / DSM 2834 / JCM 12185 / C2A).